A 751-amino-acid polypeptide reads, in one-letter code: Semaphorin-3C (751 aa).

The first 21 residues, 1 to 21 (MAFRTICVLVGVFICSICVKG), serve as a signal peptide directing secretion. The Sema domain maps to 28 to 511 (RVYLTFDELR…SNEGVSQVSL (484 aa)). The N-linked (GlcNAc...) asparagine glycan is linked to Asn-81. Cys-101 and Cys-112 form a disulfide bridge. The N-linked (GlcNAc...) asparagine glycan is linked to Asn-123. An intrachain disulfide couples Cys-130 to Cys-139. Residues Asn-252 and Asn-268 are each glycosylated (N-linked (GlcNAc...) asparagine). 2 disulfide bridges follow: Cys-266–Cys-378 and Cys-290–Cys-338. Asn-465 carries N-linked (GlcNAc...) asparagine glycosylation. Cys-514 and Cys-532 are joined by a disulfide. An Ig-like C2-type domain is found at 571 to 655 (AYRNAAEIVQ…TENSFKQTIA (85 aa)). N-linked (GlcNAc...) asparagine glycosylation is found at Asn-585 and Asn-586. Cysteines 592 and 643 form a disulfide. Basic and acidic residues predominate over residues 712–731 (TRQQHQQGDESQKMRGDYGK). The interval 712-751 (TRQQHQQGDESQKMRGDYGKLKALINSRKSRNRRNQLPES) is disordered.

The protein belongs to the semaphorin family. As to quaternary structure, interacts with PLXND1.

Its subcellular location is the secreted. Binds to plexin family members and plays an important role in the regulation of developmental processes. Required for normal cardiovascular development during embryogenesis. Functions as attractant for growing axons, and thereby plays an important role in axon growth and axon guidance. This is Semaphorin-3C (SEMA3C) from Pongo abelii (Sumatran orangutan).